The following is a 243-amino-acid chain: Ubiquinone/menaquinone biosynthesis C-methyltransferase UbiE (243 aa).

Residues Thr-69, Asp-90, and 116–117 (DA) each bind S-adenosyl-L-methionine.

This sequence belongs to the class I-like SAM-binding methyltransferase superfamily. MenG/UbiE family.

The enzyme catalyses a 2-demethylmenaquinol + S-adenosyl-L-methionine = a menaquinol + S-adenosyl-L-homocysteine + H(+). The catalysed reaction is a 2-methoxy-6-(all-trans-polyprenyl)benzene-1,4-diol + S-adenosyl-L-methionine = a 5-methoxy-2-methyl-3-(all-trans-polyprenyl)benzene-1,4-diol + S-adenosyl-L-homocysteine + H(+). It functions in the pathway quinol/quinone metabolism; menaquinone biosynthesis; menaquinol from 1,4-dihydroxy-2-naphthoate: step 2/2. It participates in cofactor biosynthesis; ubiquinone biosynthesis. Methyltransferase required for the conversion of demethylmenaquinol (DMKH2) to menaquinol (MKH2) and the conversion of 2-polyprenyl-6-methoxy-1,4-benzoquinol (DDMQH2) to 2-polyprenyl-3-methyl-6-methoxy-1,4-benzoquinol (DMQH2). The sequence is that of Ubiquinone/menaquinone biosynthesis C-methyltransferase UbiE from Cupriavidus taiwanensis (strain DSM 17343 / BCRC 17206 / CCUG 44338 / CIP 107171 / LMG 19424 / R1) (Ralstonia taiwanensis (strain LMG 19424)).